A 668-amino-acid chain; its full sequence is DNA damage-responsive serine/threonine-protein kinase RqkA (668 aa).

A Protein kinase domain is found at 13–272 (YELLALLGEG…SGAALAHLWA (260 aa)). ATP-binding positions include 19–27 (LGEGGSAQV) and K42. The Proton acceptor role is filled by D137.

This sequence belongs to the protein kinase superfamily. Ser/Thr protein kinase family. Requires pyrroloquinoline quinone as cofactor. Post-translationally, autophosphorylated.

The enzyme catalyses L-seryl-[protein] + ATP = O-phospho-L-seryl-[protein] + ADP + H(+). The catalysed reaction is L-threonyl-[protein] + ATP = O-phospho-L-threonyl-[protein] + ADP + H(+). Its activity is regulated as follows. Autokinase activity is stimulated by DNA damage. Stimulated by PQQ and DNA ends in vitro. Functionally, plays an important role in radiation resistance and DNA double-strand break (DSB) repair. Involved in transcriptional regulation of genes important for bacterial stress response. Phosphorylates PprA in vitro. This is DNA damage-responsive serine/threonine-protein kinase RqkA (rqkA) from Deinococcus radiodurans (strain ATCC 13939 / DSM 20539 / JCM 16871 / CCUG 27074 / LMG 4051 / NBRC 15346 / NCIMB 9279 / VKM B-1422 / R1).